The chain runs to 220 residues: Protein US2 homolog (220 aa).

The protein belongs to the herpesviridae US2 family.

This is Protein US2 homolog from Bovine herpesvirus 1.2 (strain ST) (BoHV-1).